A 122-amino-acid chain; its full sequence is UPF0102 protein CPE1705 (122 aa).

It belongs to the UPF0102 family.

The polypeptide is UPF0102 protein CPE1705 (Clostridium perfringens (strain 13 / Type A)).